We begin with the raw amino-acid sequence, 241 residues long: PRA1 family protein H (241 aa).

3 consecutive transmembrane segments (helical) span residues 142 to 162 (LFIV…VGLL), 189 to 205 (LSIG…LTFL), and 209 to 228 (MALF…HAGF).

This sequence belongs to the PRA1 family.

It is found in the endoplasmic reticulum membrane. Its function is as follows. May be involved in both secretory and endocytic intracellular trafficking in the endosomal/prevacuolar compartments. The chain is PRA1 family protein H (PRA1H) from Arabidopsis thaliana (Mouse-ear cress).